The following is a 492-amino-acid chain: MWRGLSALVTQAAWAPLRLCARCSTSAESLVPSSTIFALSSGQGRCAIAVIRTSGPASGLALRSLTALQEPPPARRACLRLLRHPCSGEPLDRSLVLWFPGPQSFTGEDCVEFHVHGGPAVVSGVLQALGSVPGLRPAEAGEFTRRAFAHGKLSLTEVEGLADLIRAETEAQRRQALRQLDGELSQLCQGWAKTLTKALAYVEAYIDFGEDDNLEEGVLEQADREVRALEVALGSHLRDARRGQRLLSGANVVVTGPPNAGKSSLVNLLSQKPVSIVSPEPGTTRDVLETPVDLAGFPVLLSDTAGLREGVGAVEQEGVRRARHRLEQADIILGVLDASDLASSSSCSFLDTVVTPLLAQSQDSGGQRLLLLLNKSDLLSANAPACDIALPPHLLLSCHTGAGMDSLLQALKTELAAVCGDPSTGPPLLTRVRHQYHLQGCLDALGHYQLATDLALAAEALRQARRQLNHLTGGGGTEEILDLIFQDFCVGK.

Residues Met-1–Cys-20 constitute a mitochondrion transit peptide. 3 residues coordinate 5,10-methylenetetrahydrofolate: Arg-52, Glu-112, and Lys-152. The region spanning Gly-249–Ala-416 is the TrmE-type G domain. GTP is bound by residues Gly-256–Ser-263, Gly-282–Asp-286, Asp-303–Gly-306, and Asn-374–Asp-377. Asn-259 provides a ligand contact to K(+). Mg(2+) contacts are provided by Ser-263 and Thr-284. Lys-492 is a 5,10-methylenetetrahydrofolate binding site.

The protein belongs to the TRAFAC class TrmE-Era-EngA-EngB-Septin-like GTPase superfamily. TrmE GTPase family. Homodimer; forms a dimer in the presence of potassium. Interacts with MTO1; forms the GTPBP3-MTO1 complex composed of homodimers of GTPBP3 and MTO1. K(+) serves as cofactor. In terms of tissue distribution, ubiquitously expressed. Highly expressed in tissues with high metabolic rates including heart, liver and brain. Weakly expressed in skeletal muscle.

Its subcellular location is the mitochondrion. The catalysed reaction is GTP + H2O = GDP + phosphate + H(+). GTPase component of the GTPBP3-MTO1 complex that catalyzes the 5-taurinomethyluridine (taum(5)U) modification at the 34th wobble position (U34) of mitochondrial tRNAs (mt-tRNAs), which plays a role in mt-tRNA decoding and mitochondrial translation. Taum(5)U formation on mammalian mt-tRNA requires the presence of both GTPBP3-mediated GTPase activity and MTO1 catalytic activity. This is 5-taurinomethyluridine-[tRNA] synthase subunit GTPB3, mitochondrial from Mus musculus (Mouse).